The following is a 307-amino-acid chain: F-box protein At5g03100 (307 aa).

The F-box domain maps to 8–54 (VDFISSLPDEILHHILANTPTKLAIRTSVLSKRWKHVWYETPSISIV).

The polypeptide is F-box protein At5g03100 (Arabidopsis thaliana (Mouse-ear cress)).